Here is an 852-residue protein sequence, read N- to C-terminus: MAHETPDTPGETYDFRAIEAEWSEVWEREQPFRTPDASDSRPRKYILDMFPYPSGDLHMGHAEAFALGDAVARYWRQQGFNVLHPIGWDSFGLPAENAAIKRGVDPREWTYANIETQKQSMKRYGLSFDWERELHTSDPEYYRWNQWLFLKMHEKGLAYRKDSWVNWDPVDQTVLANEQVLPDGTSDRSGAVVVKKKLTQWYLRITDYADRLVDDLNQLEGTWPAKVLSMQRNWIGRSIGAEVDFVVEGRDEPVTVFTTRPDTLHGATFMVVAPDSDLAAELVEGASEEVRESFRGYLERTQRLNEIERSTTDRPKTGIPLGLTAINPVNGERIPVWAADYVLADYGTGAVMAVPAHDQRDLDFARAFDLPVRVVVDTTQPVTGAIRIIPEDGELPDLEEVLPGRTGVALPGEGRLINSGSLNGLSKQPAIKRVIEQLEAEGRGRAAKNYRLRDWLISRQRFWGTPIPIVYDAEGSEIRVPEDQLPVRLPDTEGLDLTPKGKSPLAAATAWSNVPSPVDGSPATRDPDTMDTFMDSSWYWLRFLSPNDATKAFDPADADRWAPIDQYVGGVEHAILHLLYSRFITKVLFDLGYVTFTEPFSALLNQGMVLSGGSKMSKSKGGVDLGSEMDRHGVDAIRLTMAFAGPPEDDIDWEDVSPSGSAKFLARAWRLTGDITSAPEVEWKTGDEALRRVTHRFLAEAPGMLEAFKFNVVIARTMELVNAIRKTIDQGPGGGDAAVREATEVVAVALSLFAPYTAEDMWKRLGREGSVAFAGWRKADRNLLVQTTVTAVVQVDGKVRDKLEVDAKIGADELEALARETAGVRRSTAGRTIDKVIVRAPKIVSITTTPAP.

A 'HIGH' region motif is present at residues 51–61 (PYPSGDLHMGH). The short motif at 615-619 (KMSKS) is the 'KMSKS' region element. Lysine 618 provides a ligand contact to ATP.

It belongs to the class-I aminoacyl-tRNA synthetase family.

The protein localises to the cytoplasm. The catalysed reaction is tRNA(Leu) + L-leucine + ATP = L-leucyl-tRNA(Leu) + AMP + diphosphate. In Clavibacter sepedonicus (Clavibacter michiganensis subsp. sepedonicus), this protein is Leucine--tRNA ligase.